The primary structure comprises 4144 residues: DNA-dependent protein kinase catalytic subunit (4144 aa).

Lysine 127 bears the N6-acetyllysine mark. Residues 298 to 333 (DNYVSLFEVLSKWCSHTNVEMKKAAHSALESFLKQV) form an HEAT 1 repeat. Residues serine 521, serine 851, and serine 903 each carry the phosphoserine modification. The HEAT 2 repeat unit spans residues 1014–1050 (QDTVALLETILDGIVDPVDSTLRDFCGRCIREFLKWS). Position 1075 is a phosphoserine (serine 1075). Residue lysine 1219 is modified to N6-acetyllysine. Residues 1516–1551 (LDPSCKRLASGLLELAFAFGGLCEHLVDLLLDTAVL) are interaction with C1D. The tract at residues 1516 to 1551 (LDPSCKRLASGLLELAFAFGGLCEHLVDLLLDTAVL) is leucine-zipper. Residues 1736 to 1769 (PMKSEEFPVGTLRYSNYVDCMKKFLDALELSQSP) form a TPR 1 repeat. An N6-acetyllysine modification is found at lysine 1983. Residue serine 2069 is modified to Phosphoserine; by autocatalysis. Lysine 2271 is modified (N6-acetyllysine). The tract at residues 2448 to 3228 (LDIIYKMMAK…DHSLSMDEER (781 aa)) is KIP-binding. Threonine 2547 is modified (phosphothreonine). Threonine 2621 bears the Phosphothreonine; by autocatalysis mark. Serine 2624 carries the phosphoserine; by autocatalysis modification. Residues threonine 2650 and threonine 2659 each carry the phosphothreonine; by autocatalysis modification. The disordered stretch occupies residues 2697-2729 (AQKRNEKSQRAPLKSVGPDFGEKKLGLPGDKVD). The segment covering 2716–2729 (FGEKKLGLPGDKVD) has biased composition (basic and acidic residues). The may split the end of the DNA molecule, with the two strands separating around the region stretch occupies residues 2753–2781 (EKLSLIYARKGIAEQKREKEIKSELKMKH). A Phosphoserine modification is found at serine 2805. TPR repeat units follow at residues 2903 to 2935 (PVGV…VSPD), 2936 to 2964 (VVRW…SEIG), and 2965 to 2998 (TKQI…EEWV). The 634-residue stretch at 2922 to 3555 (PAKQFKGRMR…VYPFIISSES (634 aa)) folds into the FAT domain. Serine 3221 is modified (phosphoserine). Lysine 3257, lysine 3276, lysine 3654, and lysine 3658 each carry N6-acetyllysine. Residues 3711 to 3748 (LRNELEIPGQYDGKGKPLPEYHARIAGFDERIKVMASI) form a TPR 5 repeat. The 332-residue stretch at 3738–4069 (FDERIKVMAS…IHYAKRKLAG (332 aa)) folds into the PI3K/PI4K catalytic domain. The tract at residues 3744 to 3750 (VMASIRK) is G-loop. Serine 3747 and serine 3837 each carry phosphoserine. Residues 3935–3943 (GIGDRHLNN) form a catalytic loop region. Residues 3955–3980 (GIDFGHAFGSATQFLPVPELMPFRLT) are activation loop. Serine 4042 is modified (phosphoserine). Positions 4112-4144 (NGLSEEAQVKCLIDQATDPNILGRTWIGWEPWM) constitute an FATC domain.

Belongs to the PI3/PI4-kinase family. As to quaternary structure, DNA-PK is a heterotrimer of PRKDC and the Ku dimer (composed of XRCC6/Ku70 and XRCC5/Ku86). Formation of this complex may be promoted by interaction with ILF3. Component of the core long-range non-homologous end joining (NHEJ) complex (also named DNA-PK complex) composed of PRKDC, LIG4, XRCC4, XRCC6/Ku70, XRCC5/Ku86 and NHEJ1/XLF. Additional component of the NHEJ complex includes PAXX. Following autophosphorylation, PRKDC dissociates from DNA. Interacts with DNA-PKcs-interacting protein (KIP) with the region upstream the kinase domain. PRKDC alone also interacts with and phosphorylates DCLRE1C, thereby activating the latent endonuclease activity of this protein. Interacts with C1D. Interacts with TTI1 and TELO2. Interacts with CIB1. Interacts with SETX. Interacts with NR4A3; the DNA-dependent protein kinase complex DNA-PK phosphorylates and activates NR4A3 and prevents NR4A3 ubiquitination and degradation. Interacts with BRAT1. Part of the HDP-RNP complex composed of at least HEXIM1, PRKDC, XRCC5, XRCC6, paraspeckle proteins (SFPQ, NONO, PSPC1, RBM14, and MATR3) and NEAT1 RNA. Interacts with KAT5. Autophosphorylated at two clusters, the T2609 cluster and the S2056 cluster. Autophosphorylated on Ser-2069, Thr-2621, Thr-2650 and Thr-2659. Ser-2069 and Thr-2621 are DNA damage-inducible phosphorylation sites (inducible with ionizing radiation, IR) dephosphorylated by PPP5C. Autophosphorylation induces a conformational change that leads to remodeling of the DNA-PK complex, requisite for efficient end processing and DNA repair. Autophosphorylation in trans within DNA-PK complexes loaded on DNA ends leads to the dissociation of PRKDC from DNA and the transition into the short-range NHEJ complex. Autophosphorylation of the T2609 cluster is required for hematopoietic development and protein synthesis in erythrocytes precursors. In terms of processing, S-nitrosylated by GAPDH. Post-translationally, polyubiquitinated by RNF144A, leading to proteasomal degradation.

Its subcellular location is the nucleus. It is found in the nucleolus. The protein resides in the cytoplasm. The protein localises to the cytosol. It carries out the reaction L-seryl-[protein] + ATP = O-phospho-L-seryl-[protein] + ADP + H(+). The catalysed reaction is L-threonyl-[protein] + ATP = O-phospho-L-threonyl-[protein] + ADP + H(+). With respect to regulation, activity seems to be attenuated by autophosphorylation. Binding to the SL1 region of U3 small nucleolar RNA promotes auto-phosphorylation activity. Inhibited by wortmannin. Its function is as follows. Serine/threonine-protein kinase that acts as a molecular sensor for DNA damage. Involved in DNA non-homologous end joining (NHEJ) required for double-strand break (DSB) repair and V(D)J recombination. Must be bound to DNA to express its catalytic properties. Promotes processing of hairpin DNA structures in V(D)J recombination by activation of the hairpin endonuclease artemis (DCLRE1C). Recruited by XRCC5 and XRCC6 to DNA ends and is required to (1) protect and align broken ends of DNA, thereby preventing their degradation, (2) and sequester the DSB for repair by NHEJ. Acts as a scaffold protein to aid the localization of DNA repair proteins to the site of damage. The assembly of the DNA-PK complex at DNA ends is also required for the NHEJ ligation step. Found at the ends of chromosomes, suggesting a further role in the maintenance of telomeric stability and the prevention of chromosomal end fusion. Also involved in modulation of transcription. As part of the DNA-PK complex, involved in the early steps of ribosome assembly by promoting the processing of precursor rRNA into mature 18S rRNA in the small-subunit processome. Binding to U3 small nucleolar RNA, recruits PRKDC and XRCC5/Ku86 to the small-subunit processome. Recognizes the substrate consensus sequence [ST]-Q. Phosphorylates 'Ser-139' of histone variant H2AX, thereby regulating DNA damage response mechanism. Phosphorylates ASF1A, DCLRE1C, c-Abl/ABL1, histone H1, HSPCA, c-jun/JUN, p53/TP53, PARP1, POU2F1, DHX9, FH, SRF, NHEJ1/XLF, XRCC1, XRCC4, XRCC5, XRCC6, WRN, MYC and RFA2. Can phosphorylate C1D not only in the presence of linear DNA but also in the presence of supercoiled DNA. Ability to phosphorylate p53/TP53 in the presence of supercoiled DNA is dependent on C1D. Acts as a regulator of the phosphatidylinositol 3-kinase/protein kinase B signal transduction by mediating phosphorylation of 'Ser-473' of protein kinase B (PKB/AKT1, PKB/AKT2, PKB/AKT3), promoting their activation. Contributes to the determination of the circadian period length by antagonizing phosphorylation of CRY1 'Ser-588' and increasing CRY1 protein stability, most likely through an indirect mechanism. Plays a role in the regulation of DNA virus-mediated innate immune response by assembling into the HDP-RNP complex, a complex that serves as a platform for IRF3 phosphorylation and subsequent innate immune response activation through the cGAS-STING pathway. Also regulates the cGAS-STING pathway by catalyzing phosphorylation of CGAS, thereby impairing CGAS oligomerization and activation. Also regulates the cGAS-STING pathway by mediating phosphorylation of PARP1. This is DNA-dependent protein kinase catalytic subunit (PRKDC) from Canis lupus familiaris (Dog).